Consider the following 312-residue polypeptide: Small ribosomal subunit protein uS2 (312 aa).

This sequence belongs to the universal ribosomal protein uS2 family. As to quaternary structure, component of the small ribosomal subunit. Mature ribosomes consist of a small (40S) and a large (60S) subunit. The 40S subunit contains about 33 different proteins and 1 molecule of RNA (18S). The 60S subunit contains about 49 different proteins and 3 molecules of RNA (25S, 5.8S and 5S). Interacts with ribosomal protein S21.

The protein resides in the cytoplasm. Its function is as follows. Required for the assembly and/or stability of the 40S ribosomal subunit. Required for the processing of the 20S rRNA-precursor to mature 18S rRNA in a late step of the maturation of 40S ribosomal subunits. This chain is Small ribosomal subunit protein uS2, found in Vitis vinifera (Grape).